The primary structure comprises 744 residues: Endonuclease MutS2 (744 aa).

315 to 322 (GPNMGGKT) is a binding site for ATP. One can recognise a Smr domain in the interval 668-743 (VDLRGLTVAE…GHGVTVVALR (76 aa)).

The protein belongs to the DNA mismatch repair MutS family. MutS2 subfamily. In terms of assembly, homodimer. Interacts with MutL. Binds to stalled ribosomes, contacting rRNA.

Nuclease activity is stimulated by interaction with MutL. ATPase activity is stimulated by dsDNA. Functionally, endonuclease that is involved in the suppression of homologous recombination and may thus have a key role in the control of bacterial genetic diversity. Cleaves the phosphate backbone of oligodeoxynucleotides non-sequence-specifically at the 3' side of the phosphates. Preferably incises the branched DNA structures, especially the D-loop structure over the Holliday junction. Has ATPase activity. Binds to dsDNA but not to ssDNA. In terms of biological role, acts as a ribosome collision sensor, splitting the ribosome into its 2 subunits. Detects stalled/collided 70S ribosomes which it binds and splits by an ATP-hydrolysis driven conformational change. Acts upstream of the ribosome quality control system (RQC), a ribosome-associated complex that mediates the extraction of incompletely synthesized nascent chains from stalled ribosomes and their subsequent degradation. Probably generates substrates for RQC. This is Endonuclease MutS2 from Thermus thermophilus (strain ATCC 27634 / DSM 579 / HB8).